A 230-amino-acid chain; its full sequence is Glutathione S-transferase 2 (230 aa).

A GST N-terminal domain is found at 2-86 (AHFTLYSHAG…YLADKYDTDR (85 aa)). The GST C-terminal domain occupies 93–230 (DDPEYYKLIQ…EELAKAKEQH (138 aa)).

The protein belongs to the GST superfamily.

The catalysed reaction is RX + glutathione = an S-substituted glutathione + a halide anion + H(+). Functionally, involved in the oxidative stress response and detoxification. The polypeptide is Glutathione S-transferase 2 (gst2) (Schizosaccharomyces pombe (strain 972 / ATCC 24843) (Fission yeast)).